A 689-amino-acid polypeptide reads, in one-letter code: MSKHTVLFELGCEELPPKSLKTLRDALQAETVKGLNEAGLNFASVEAYAAPRRLALKIVDVDAAQADTQKRFDGPAVQAAYDAEGKPTKALEGFMRGQGITVEQLSTFQAGKVEKVCYLKDVKGQSLDTLLPQILQTALDNLPIAKRMRSAASRTEFVRPVKWVVLLKDDQVIEATIQDHKAGNVTYGHRFHAPEAVTLAHANDYLAALEKAYVVANFEKRQATIQEQVKKLADEVNATAIVPADLLDEVTSLVEWPVALRATFEERYLAVPQEALITTMQDNQKYFCLINAEGKLQPYFITVSNIESKDPTQIIEGNEKVVRPRLSDAEFFFLQDQKQPLASRKEKLANMVFQAQLGTLWDKSTRIAKLAVALSSITGANPADAEKAALLAKCDLTSELVGEFPELQGIAGTYYARIEGENTEVSEALGEQYLPKFAGDVLPKTKTGTTIALSDRLDTLVGIFGIGQAPTGSKDPFALRRSAIGILRLIIENELDVTIEELVNLALQGYGDIVKDHDKTRADAVAFLEGRYRAKYEDQGVAVDVLQAVQALAPKSPLDFDKRVNAVNHFRTLPEAAALAAANKRVANILAKEATPEGSVVEANLVEDAEKALFAELQAVTPVVEPLLAAKDYTAALSKLAALRAPIDAFFDGVMVMADDAGLKANRLRLLAQLRNLFTAVADVSVLQG.

This sequence belongs to the class-II aminoacyl-tRNA synthetase family. As to quaternary structure, tetramer of two alpha and two beta subunits.

It is found in the cytoplasm. It catalyses the reaction tRNA(Gly) + glycine + ATP = glycyl-tRNA(Gly) + AMP + diphosphate. The polypeptide is Glycine--tRNA ligase beta subunit (Acinetobacter baumannii (strain AB307-0294)).